The sequence spans 81 residues: Small ribosomal subunit protein bS16 (81 aa).

It belongs to the bacterial ribosomal protein bS16 family.

The chain is Small ribosomal subunit protein bS16 from Coprothermobacter proteolyticus (strain ATCC 35245 / DSM 5265 / OCM 4 / BT).